The following is a 379-amino-acid chain: uncharacterized protein (379 aa).

Residues 9–26 (YFQLITTIFLISSITIAA) form a helical membrane-spanning segment.

This sequence to A.liquefaciens L-sorbosone dehydrogenase.

The protein resides in the membrane. This is an uncharacterized protein from Borreliella burgdorferi (strain ATCC 35210 / DSM 4680 / CIP 102532 / B31) (Borrelia burgdorferi).